A 108-amino-acid polypeptide reads, in one-letter code: Protein SMALL AUXIN UP-REGULATED RNA 8 (108 aa).

The protein belongs to the ARG7 family. As to expression, expressed in seedlings, leaves and flowers.

It is found in the cell membrane. Functionally, provide a mechanistic link between auxin and plasma membrane H(+)-ATPases (PM H(+)-ATPases, e.g. AHA1 and AHA2), and triggers PM H(+)-ATPases activity by promoting phosphorylation of their C-terminal autoinhibitory domain as a result of PP2C-D subfamily of type 2C phosphatases inhibition, thus leading to the acidification of the apoplast and the facilitation of solutes and water uptake to drive cell expansion. Triggers plant growth probably by promoting cell elongation. Regulates branch angles and bending. The sequence is that of Protein SMALL AUXIN UP-REGULATED RNA 8 from Arabidopsis thaliana (Mouse-ear cress).